We begin with the raw amino-acid sequence, 623 residues long: Membrane protein insertase YidC (623 aa).

Transmembrane regions (helical) follow at residues 8-28 (LILATGLSFLVIMVWFFLFPP), 379-399 (MGLAIIALTFLLKALVLPLAY), 449-469 (LPILIQIPIFFSLYKVIFVTI), 507-527 (TTMALIFIGALPILLGVSMWL), and 543-563 (IFAWMPWVFMFMLGHFASGLV). The segment covering 601-617 (KPAAQPAGKAANDGAAP) has biased composition (low complexity). Residues 601 to 623 (KPAAQPAGKAANDGAAPAKKRKP) form a disordered region.

This sequence belongs to the OXA1/ALB3/YidC family. Type 1 subfamily. In terms of assembly, interacts with the Sec translocase complex via SecD. Specifically interacts with transmembrane segments of nascent integral membrane proteins during membrane integration.

Its subcellular location is the cell inner membrane. In terms of biological role, required for the insertion and/or proper folding and/or complex formation of integral membrane proteins into the membrane. Involved in integration of membrane proteins that insert both dependently and independently of the Sec translocase complex, as well as at least some lipoproteins. Aids folding of multispanning membrane proteins. The chain is Membrane protein insertase YidC from Cereibacter sphaeroides (strain ATCC 17023 / DSM 158 / JCM 6121 / CCUG 31486 / LMG 2827 / NBRC 12203 / NCIMB 8253 / ATH 2.4.1.) (Rhodobacter sphaeroides).